The following is a 105-amino-acid chain: Ig lambda chain C region (105 aa).

The 95-residue stretch at 6–100 folds into the Ig-like domain; sequence PSVILFPPSS…EGHTVEKSLA (95 aa). The cysteines at positions 27 and 86 are disulfide-linked.

The sequence is that of Ig lambda chain C region from Oryctolagus cuniculus (Rabbit).